A 227-amino-acid polypeptide reads, in one-letter code: Phosphoribosylformylglycinamidine synthase subunit PurQ (227 aa).

A Glutamine amidotransferase type-1 domain is found at 3–225 (FAVIVFPGSN…LKQWRETYVV (223 aa)). C86 acts as the Nucleophile in catalysis. Catalysis depends on residues H194 and E196.

Part of the FGAM synthase complex composed of 1 PurL, 1 PurQ and 2 PurS subunits.

Its subcellular location is the cytoplasm. The enzyme catalyses N(2)-formyl-N(1)-(5-phospho-beta-D-ribosyl)glycinamide + L-glutamine + ATP + H2O = 2-formamido-N(1)-(5-O-phospho-beta-D-ribosyl)acetamidine + L-glutamate + ADP + phosphate + H(+). It carries out the reaction L-glutamine + H2O = L-glutamate + NH4(+). The protein operates within purine metabolism; IMP biosynthesis via de novo pathway; 5-amino-1-(5-phospho-D-ribosyl)imidazole from N(2)-formyl-N(1)-(5-phospho-D-ribosyl)glycinamide: step 1/2. Functionally, part of the phosphoribosylformylglycinamidine synthase complex involved in the purines biosynthetic pathway. Catalyzes the ATP-dependent conversion of formylglycinamide ribonucleotide (FGAR) and glutamine to yield formylglycinamidine ribonucleotide (FGAM) and glutamate. The FGAM synthase complex is composed of three subunits. PurQ produces an ammonia molecule by converting glutamine to glutamate. PurL transfers the ammonia molecule to FGAR to form FGAM in an ATP-dependent manner. PurS interacts with PurQ and PurL and is thought to assist in the transfer of the ammonia molecule from PurQ to PurL. The polypeptide is Phosphoribosylformylglycinamidine synthase subunit PurQ (Bacillus mycoides (strain KBAB4) (Bacillus weihenstephanensis)).